We begin with the raw amino-acid sequence, 390 residues long: tRNA(Met) cytidine acetate ligase (390 aa).

ATP-binding positions include 7-20 (ITEY…HIYH), glycine 101, asparagine 152, and arginine 177.

This sequence belongs to the TmcAL family.

The protein localises to the cytoplasm. The catalysed reaction is cytidine(34) in elongator tRNA(Met) + acetate + ATP = N(4)-acetylcytidine(34) in elongator tRNA(Met) + AMP + diphosphate. In terms of biological role, catalyzes the formation of N(4)-acetylcytidine (ac(4)C) at the wobble position of elongator tRNA(Met), using acetate and ATP as substrates. First activates an acetate ion to form acetyladenylate (Ac-AMP) and then transfers the acetyl group to tRNA to form ac(4)C34. The chain is tRNA(Met) cytidine acetate ligase from Leuconostoc mesenteroides subsp. mesenteroides (strain ATCC 8293 / DSM 20343 / BCRC 11652 / CCM 1803 / JCM 6124 / NCDO 523 / NBRC 100496 / NCIMB 8023 / NCTC 12954 / NRRL B-1118 / 37Y).